We begin with the raw amino-acid sequence, 509 residues long: Cardiolipin synthase 1 (509 aa).

The next 3 helical transmembrane spans lie at 4–24 (PIIQ…LLNT), 30–50 (YTFV…VIFI), and 59–79 (LAWF…YSIF). 2 consecutive PLD phosphodiesterase domains span residues 238–265 (VNYR…GDEY) and 422–449 (KDGF…DVRS). Active-site residues include His-243, Lys-245, Asp-250, His-427, Lys-429, and Asp-434.

This sequence belongs to the phospholipase D family. Cardiolipin synthase subfamily.

It localises to the cell membrane. It catalyses the reaction 2 a 1,2-diacyl-sn-glycero-3-phospho-(1'-sn-glycerol) = a cardiolipin + glycerol. Catalyzes the reversible phosphatidyl group transfer from one phosphatidylglycerol molecule to another to form cardiolipin (CL) (diphosphatidylglycerol) and glycerol. The protein is Cardiolipin synthase 1 (cls1) of Bacillus anthracis.